A 1018-amino-acid chain; its full sequence is Serine/threonine-protein phosphatase BSL2 (1018 aa).

A disordered region spans residues 1-75 (MDEDSSMVAD…AAAVVGQEQQ (75 aa)). The span at 41 to 57 (SPPPEGGSVPTPPPSDP) shows a compositional bias: pro residues. Residues 63-75 (QQQAAAVVGQEQQ) show a composition bias toward low complexity. 5 Kelch repeats span residues 149-195 (TSAG…VATA), 253-301 (YLMA…TASA), 306-356 (LLLL…VFVN), 362-409 (SGGA…DAAG), and 430-479 (LIFI…RLPG). Residues 569–590 (DRDCGAEATPSGKPTFSLIKPD) form a disordered region. Ser627 carries the phosphoserine modification. The Mn(2+) site is built by Asp720, His722, Asp754, and Asn786. The active-site Proton donor is the His787. His839 and His918 together coordinate Mn(2+). Position 975 is a phosphoserine (Ser975). The segment covering 994-1011 (ANRPATPTRGRPQNSNDR) has biased composition (polar residues). The disordered stretch occupies residues 994–1018 (ANRPATPTRGRPQNSNDRGGSLAWM).

The protein belongs to the PPP phosphatase family. BSU subfamily. In terms of assembly, interacts with BSK8. Mn(2+) is required as a cofactor. In terms of tissue distribution, expressed throughout the plant, with a higher level in younger parts.

The protein resides in the cytoplasm. It is found in the cell membrane. It localises to the nucleus. The enzyme catalyses O-phospho-L-seryl-[protein] + H2O = L-seryl-[protein] + phosphate. The catalysed reaction is O-phospho-L-threonyl-[protein] + H2O = L-threonyl-[protein] + phosphate. In terms of biological role, phosphatase involved in elongation process, probably by acting as a regulator of brassinolide signaling. This is Serine/threonine-protein phosphatase BSL2 (BSL2) from Arabidopsis thaliana (Mouse-ear cress).